Consider the following 445-residue polypeptide: C-type lectin domain family 4 member M (445 aa).

The Cytoplasmic portion of the chain corresponds to 1 to 49; the sequence is MSDSKEPRVQQLGLLEEDPTTSGIRLFPRDFQFQQIHGHKSSTGCLGHG. Residues 14–15 carry the Endocytosis signal motif; sequence LL. Residues 50–70 form a helical; Signal-anchor for type II membrane protein membrane-spanning segment; that stretch reads PLVLQLLSFTLLAGVLVAILV. The Extracellular segment spans residues 71-445; it reads QVSKVPSSLS…KKPAVCFRDE (375 aa). N92 is a glycosylation site (N-linked (GlcNAc...) asparagine). 9 repeat units span residues 108-130, 131-151, 154-176, 177-199, 200-222, 223-245, 246-268, 269-291, and 292-314. The segment at 108-315 is 9 X approximate tandem repeats; that stretch reads KLQEIYQELT…AFERLCRHCP (208 aa). 4 cysteine pairs are disulfide-bonded: C311–C441, C314–C325, C342–C435, and C414–C427. A C-type lectin domain is found at 320–436; it reads FFQGNCYFMS…CDIDNYWICK (117 aa). Ca(2+) is bound by residues E405, N407, S409, E412, N423, and D424. An N-linked (GlcNAc...) asparagine glycan is attached at N407.

Homotetramer.

It is found in the membrane. Probable pathogen-recognition receptor involved in peripheral immune surveillance in liver. May mediate the endocytosis of pathogens which are subsequently degraded in lysosomal compartments. Probably recognizes in a calcium-dependent manner high mannose N-linked oligosaccharides in a variety of pathogen antigens. Is a receptor for ICAM3, probably by binding to mannose-like carbohydrates. The chain is C-type lectin domain family 4 member M (CLEC4M) from Pan troglodytes (Chimpanzee).